Reading from the N-terminus, the 296-residue chain is GTPase Era (296 aa).

In terms of domain architecture, Era-type G spans 3 to 170 (KSGFVTIVGR…KELMFKYIPE (168 aa)). The G1 stretch occupies residues 11 to 18 (GRPNVGKS). Position 11 to 18 (11 to 18 (GRPNVGKS)) interacts with GTP. The segment at 37 to 41 (QTTRN) is G2. Residues 58-61 (DTPG) are G3. GTP contacts are provided by residues 58–62 (DTPGI) and 120–123 (NKID). The interval 120 to 123 (NKID) is G4. The interval 149–151 (ISA) is G5. One can recognise a KH type-2 domain in the interval 201-278 (LSEEVPHGIA…YIRLWVKVKE (78 aa)).

It belongs to the TRAFAC class TrmE-Era-EngA-EngB-Septin-like GTPase superfamily. Era GTPase family. In terms of assembly, monomer.

It is found in the cytoplasm. The protein resides in the cell membrane. In terms of biological role, an essential GTPase that binds both GDP and GTP, with rapid nucleotide exchange. Plays a role in 16S rRNA processing and 30S ribosomal subunit biogenesis and possibly also in cell cycle regulation and energy metabolism. The polypeptide is GTPase Era (Clostridium botulinum (strain Loch Maree / Type A3)).